The following is a 270-amino-acid chain: Nuclease P1 (270 aa).

Residues Trp1, His6, His15, Asp45, and His60 each coordinate a divalent metal cation. 1–6 serves as a coordination point for substrate; it reads WGALGH. Substrate contacts are provided by residues 45–51, 60–63, and 73–78; these read DEYRLTS, HFID, and NVDYER. 2 disulfides stabilise this stretch: Cys72–Cys217 and Cys80–Cys85. Residue Asn92 is glycosylated (N-linked (GlcNAc...) asparagine). A divalent metal cation is bound by residues His116, Asp120, and His126. Positions 116–164 are substrate binding; that stretch reads HFIGDMTQPLHDEAYAVGGNKINVTFDGYHDNLHSDWDTYMPQKLIGGH. The N-linked (GlcNAc...) asparagine glycan is linked to Asn138. A divalent metal cation-binding residues include His149 and Asp153. Residues Asn184 and Asn197 are each glycosylated (N-linked (GlcNAc...) asparagine).

The protein belongs to the nuclease type I family. Zn(2+) serves as cofactor.

The protein localises to the secreted. The enzyme catalyses Endonucleolytic cleavage to 5'-phosphomononucleotide and 5'-phosphooligonucleotide end-products.. Its function is as follows. Hydrolyzes only single-stranded DNA and RNA without apparent specificity for bases. In Penicillium citrinum, this protein is Nuclease P1.